A 496-amino-acid polypeptide reads, in one-letter code: Hexokinase-1 (496 aa).

The chain crosses the membrane as a helical span at residues 4–24 (VAVGATVVCTAAVCAVAVLVV). Residues 35-487 (GRVLAILKAF…SGIGAALLAA (453 aa)) enclose the Hexokinase domain. Positions 90 to 228 (SGDEKGLFYA…GLDMRIAALV (139 aa)) are hexokinase small subdomain. ADP contacts are provided by G104, T105, and N106. 4 residues coordinate D-glucose: T194, K195, N229, and D230. The interval 229 to 476 (NDTVGTLAGG…GSVEVTHSND (248 aa)) is hexokinase large subdomain. T253 contributes to the ADP binding site. N256, E284, and E315 together coordinate D-glucose. Residue G441 coordinates ADP.

The protein belongs to the hexokinase family. As to quaternary structure, interacts with RPT5B in nucleus. Interacts with RHIP1. Interacts with KING1 in mitochondria. Interacts with CLF (via SANT domain) and EZA1/SWN (via SANT domain) in nucleus. Highly expressed in flowers and siliques, at intermediate levels in roots and stems, and at lower levels in rosette and cauline leaves.

It localises to the mitochondrion outer membrane. Its subcellular location is the nucleus. The enzyme catalyses a D-hexose + ATP = a D-hexose 6-phosphate + ADP + H(+). It carries out the reaction D-fructose + ATP = D-fructose 6-phosphate + ADP + H(+). The catalysed reaction is D-glucose + ATP = D-glucose 6-phosphate + ADP + H(+). The protein operates within carbohydrate metabolism; hexose metabolism. It functions in the pathway carbohydrate degradation; glycolysis; D-glyceraldehyde 3-phosphate and glycerone phosphate from D-glucose: step 1/4. Fructose and glucose phosphorylating enzyme. May be involved in the phosphorylation of glucose during the export from mitochondrion to cytosol. Acts as a sugar sensor which may regulate sugar-dependent gene repression or activation. Mediates the effects of sugar on plant growth and development independently of its catalytic activity or the sugar metabolism. May regulate the execution of program cell death in plant cells. Promotes roots and leaves growth. Together with sugar, is involved in the regulation of the expression of aquaporin genes, and reduces leaf water conductance, to coordinate sugar levels with the loss of water through transpiration. Regulates cell proliferation and expansion early during leaf development. Involved in sucrose-induced leaf growth stimulation independently of GPT2. May participate to the stimulation of hypocotyl elongation under long-day (LD) conditions. Forms a nuclear complex with CLF and EZA1/SWN to target common glucose-responsive genes and regulate glucose signaling. Is required for CLF- and EZA1/SWN-mediated histone H3 trimethylation on 'Lys-27' (H3K27me3) and glucose-mediated gene repression. In Arabidopsis thaliana (Mouse-ear cress), this protein is Hexokinase-1.